A 441-amino-acid polypeptide reads, in one-letter code: Diuretic hormone receptor (441 aa).

Asparagine 99, asparagine 107, and asparagine 112 each carry an N-linked (GlcNAc...) asparagine glycan. A helical membrane pass occupies residues 135 to 158 (FVFFVGFCLSLVAIAVAIWIFLYF). The Cytoplasmic portion of the chain corresponds to 159-166 (KDLRCLRN). A helical membrane pass occupies residues 167–187 (TIHTNLMATYICNDATWIISA). Residues 188–194 (VVQEYVE) are Extracellular-facing. A helical membrane pass occupies residues 195-224 (NGGLCSVLAVLMHYFYLTNFFWMFVEGLYL). Over 225 to 238 (FLLVVATFTGEKVK) the chain is Cytoplasmic. A helical membrane pass occupies residues 239–260 (LQIYIIIGWGIPGVIVVTWAII). Over 261–291 (KHLGKTAPDNAGESHPMVLLIKHCPWMAEDY) the chain is Extracellular. A helical transmembrane segment spans residues 292–315 (FDWIHQAPVITVLAVNLVFLFSIM). The Cytoplasmic portion of the chain corresponds to 316 to 338 (WVLITKLQSANTAETQQYRKATK). The chain crosses the membrane as a helical span at residues 339–357 (ALLVLFPLLGITYILMMQG). The Extracellular segment spans residues 358-371 (PMDGVAGHVFRNAQ). A helical transmembrane segment spans residues 372–391 (ALLLSLQGFTVALFYCFLNT). The Cytoplasmic segment spans residues 392 to 441 (EVQNTLRHRMSRWRETRTVGGGRRYTLSGHSKDWSPRSRTESIRCLQHRS).

It belongs to the G-protein coupled receptor 2 family. In terms of tissue distribution, expressed in Malpighian tubules.

The protein localises to the cell membrane. In terms of biological role, receptor for the insect diurectic hormone. The activity of this receptor is mediated by G proteins which activate adenylyl cyclase. The sequence is that of Diuretic hormone receptor from Acheta domesticus (House cricket).